A 63-amino-acid chain; its full sequence is Anaphase-promoting complex subunit 13 (63 aa).

The disordered stretch occupies residues 36–63; sequence KTDDTEETNQETQQADAETWRDLALDTQ. Residues 53 to 63 are compositionally biased toward basic and acidic residues; the sequence is ETWRDLALDTQ.

It belongs to the APC13 family. As to quaternary structure, component of the anaphase promoting complex/cyclosome (APC/C) complex. As to expression, expressed constitutively in roots, leaves, stems, buds, flowers, and seeds.

It is found in the nucleus. The protein operates within protein modification; protein ubiquitination. In terms of biological role, component of the anaphase promoting complex/cyclosome (APC/C), a cell cycle-regulated E3 ubiquitin ligase that controls progression through mitosis and the G1 phase of the cell cycle. The APC/C complex acts by mediating ubiquitination and subsequent degradation of target proteins. Regulates global growth and development, including phyllotaxis and apical dominance. Required for pollen maturation. Promotes (pri) miRNA transcription of each MIR159 genes. The sequence is that of Anaphase-promoting complex subunit 13 from Arabidopsis thaliana (Mouse-ear cress).